The chain runs to 101 residues: Small ribosomal subunit protein uS14 (101 aa).

The segment at 1–20 (MAKTSQVNRNKRREKMAARD) is disordered.

It belongs to the universal ribosomal protein uS14 family. Part of the 30S ribosomal subunit. Contacts proteins S3 and S10.

Its function is as follows. Binds 16S rRNA, required for the assembly of 30S particles and may also be responsible for determining the conformation of the 16S rRNA at the A site. This Acidiphilium cryptum (strain JF-5) protein is Small ribosomal subunit protein uS14.